The chain runs to 188 residues: Probable nicotinate-nucleotide adenylyltransferase (188 aa).

It belongs to the NadD family.

The catalysed reaction is nicotinate beta-D-ribonucleotide + ATP + H(+) = deamido-NAD(+) + diphosphate. The protein operates within cofactor biosynthesis; NAD(+) biosynthesis; deamido-NAD(+) from nicotinate D-ribonucleotide: step 1/1. Its function is as follows. Catalyzes the reversible adenylation of nicotinate mononucleotide (NaMN) to nicotinic acid adenine dinucleotide (NaAD). The polypeptide is Probable nicotinate-nucleotide adenylyltransferase (Listeria welshimeri serovar 6b (strain ATCC 35897 / DSM 20650 / CCUG 15529 / CIP 8149 / NCTC 11857 / SLCC 5334 / V8)).